The primary structure comprises 2005 residues: Structural maintenance of chromosomes flexible hinge domain-containing protein 1 (2005 aa).

A compositionally biased stretch (gly residues) spans 1 to 13 (MAAADGGGPGGAS). Residues 1–23 (MAAADGGGPGGASVGTEEDGGGV) are disordered. Ala2 carries the post-translational modification N-acetylalanine. Residues 111-702 (TKERIDFLPH…LSVTWPEGDE (592 aa)) are ATPase activity domain. Lys1349 carries the post-translational modification N6-acetyllysine. Residues Lys1374 and Lys1496 each participate in a glycyl lysine isopeptide (Lys-Gly) (interchain with G-Cter in SUMO2) cross-link. The residue at position 1499 (Thr1499) is a Phosphothreonine. The SMC hinge domain occupies 1720–1847 (GDVLGKIAHL…DNLDAANHYR (128 aa)). Lys1802 is modified (N6-succinyllysine). Phosphoserine is present on Ser1974.

The protein belongs to the SMC family. Highly divergent. Homodimer; homodimerizes via its SMC hinge domain. Interacts with LRIF1. In terms of processing, sumoylated with SUMO1.

It localises to the chromosome. It carries out the reaction ATP + H2O = ADP + phosphate + H(+). In terms of biological role, non-canonical member of the structural maintenance of chromosomes (SMC) protein family that plays a key role in epigenetic silencing by regulating chromatin architecture. Promotes heterochromatin formation in both autosomes and chromosome X, probably by mediating the merge of chromatin compartments. Plays a key role in chromosome X inactivation in females by promoting the spreading of heterochromatin. Recruited to inactivated chromosome X by Xist RNA and acts by mediating the merge of chromatin compartments: promotes random chromatin interactions that span the boundaries of existing structures, leading to create a compartment-less architecture typical of inactivated chromosome X. Required to facilitate Xist RNA spreading. Also required for silencing of a subset of clustered autosomal loci in somatic cells, such as the DUX4 locus. Has ATPase activity; may participate in structural manipulation of chromatin in an ATP-dependent manner as part of its role in gene expression regulation. Also plays a role in DNA repair: localizes to sites of DNA double-strand breaks in response to DNA damage to promote the repair of DNA double-strand breaks. Acts by promoting non-homologous end joining (NHEJ) and inhibiting homologous recombination (HR) repair. This is Structural maintenance of chromosomes flexible hinge domain-containing protein 1 from Homo sapiens (Human).